A 329-amino-acid polypeptide reads, in one-letter code: MWGLTVLLLPVVSFALYPEEILDTQWELWKKTYRKQYNSKGDEISRRLIWEKNLKHISIHNLEASLGVHTYELAMNHLGDMTSEEVVQKMTGLKVPASRSRSNDTLYIPDWEGRAPDSVDYRKKGYVTPVKNQGQCGSCWAFSSVGALEGQLKKKTGKLLNLSPQNLVDCVSENDGCGGGYMTNAFQYVQKNRGIDSEDAYPYVGQDENCMYNPTGKAAKCRGYREIPEGNEKALKRAVARVGPISVAIDASLTSFQFYRKGVYYDENCNSDNLNHAVLAVGYGIQKGNKHWIIKNSWGENWGNKGYILMARNKNNACGIANLASFPKM.

An N-terminal signal peptide occupies residues 1 to 15; it reads MWGLTVLLLPVVSFA. A propeptide spans 16–114 (activation peptide); the sequence is LYPEEILDTQ…TLYIPDWEGR (99 aa). N103 carries N-linked (GlcNAc...) asparagine glycosylation. 3 cysteine pairs are disulfide-bonded: C136/C177, C170/C210, and C269/C318. Residue C139 is part of the active site. Active-site residues include H276 and N296.

Belongs to the peptidase C1 family.

It localises to the lysosome. It is found in the secreted. The protein resides in the apical cell membrane. It carries out the reaction Broad proteolytic activity. With small-molecule substrates and inhibitors, the major determinant of specificity is P2, which is preferably Leu, Met &gt; Phe, and not Arg.. Functionally, thiol protease involved in osteoclastic bone resorption and may participate partially in the disorder of bone remodeling. Displays potent endoprotease activity against fibrinogen at acid pH. May play an important role in extracellular matrix degradation. Involved in the release of thyroid hormone thyroxine (T4) by limited proteolysis of TG/thyroglobulin in the thyroid follicle lumen. In Bos taurus (Bovine), this protein is Cathepsin K (CTSK).